The sequence spans 450 residues: D-inositol 3-phosphate glycosyltransferase (450 aa).

His-21 contributes to the 1D-myo-inositol 3-phosphate binding site. UDP-N-acetyl-alpha-D-glucosamine is bound by residues Gln-27 to Pro-28 and Gly-35. 1D-myo-inositol 3-phosphate is bound by residues Asp-32–Asn-37, Lys-90, Tyr-123, Thr-147, and Arg-167. UDP-N-acetyl-alpha-D-glucosamine contacts are provided by Arg-241, Lys-246, and Val-307. Residues Tyr-316, Arg-317, and Ala-319 each coordinate Mg(2+). UDP-N-acetyl-alpha-D-glucosamine-binding residues include Glu-329 and Glu-337. Thr-343 contributes to the Mg(2+) binding site.

It belongs to the glycosyltransferase group 1 family. MshA subfamily. Homodimer.

The catalysed reaction is 1D-myo-inositol 3-phosphate + UDP-N-acetyl-alpha-D-glucosamine = 1D-myo-inositol 2-acetamido-2-deoxy-alpha-D-glucopyranoside 3-phosphate + UDP + H(+). In terms of biological role, catalyzes the transfer of a N-acetyl-glucosamine moiety to 1D-myo-inositol 3-phosphate to produce 1D-myo-inositol 2-acetamido-2-deoxy-glucopyranoside 3-phosphate in the mycothiol biosynthesis pathway. This is D-inositol 3-phosphate glycosyltransferase from Geodermatophilus obscurus (strain ATCC 25078 / DSM 43160 / JCM 3152 / CCUG 61914 / KCC A-0152 / KCTC 9177 / NBRC 13315 / NRRL B-3577 / G-20).